Reading from the N-terminus, the 214-residue chain is Orotate phosphoribosyltransferase (214 aa).

5-phospho-alpha-D-ribose 1-diphosphate is bound at residue Lys-26. 34 to 35 (FF) contributes to the orotate binding site. Residues 72-73 (YK), Arg-99, Lys-100, Lys-103, His-105, and 124-132 (DDVITAGTA) each bind 5-phospho-alpha-D-ribose 1-diphosphate. Orotate is bound by residues Thr-128 and Arg-156.

It belongs to the purine/pyrimidine phosphoribosyltransferase family. PyrE subfamily. Homodimer. The cofactor is Mg(2+).

It carries out the reaction orotidine 5'-phosphate + diphosphate = orotate + 5-phospho-alpha-D-ribose 1-diphosphate. It participates in pyrimidine metabolism; UMP biosynthesis via de novo pathway; UMP from orotate: step 1/2. Functionally, catalyzes the transfer of a ribosyl phosphate group from 5-phosphoribose 1-diphosphate to orotate, leading to the formation of orotidine monophosphate (OMP). The protein is Orotate phosphoribosyltransferase of Actinobacillus succinogenes (strain ATCC 55618 / DSM 22257 / CCUG 43843 / 130Z).